The sequence spans 83 residues: Mu-conotoxin-like PnMKLT1-014 (83 aa).

A signal peptide spans 1-22 (MNLTCMMIVAVLFLTAWTFVMA). Residues 23–50 (DDSNNGLANLFSKSRYEMEDPEPSKLEK) constitute a propeptide that is removed on maturation. Intrachain disulfides connect Cys54–Cys72, Cys61–Cys77, and Cys71–Cys82.

It belongs to the conotoxin O1 superfamily. As to expression, expressed by the venom duct.

Its subcellular location is the secreted. Mu-conotoxins block voltage-gated sodium channels (Nav). This is Mu-conotoxin-like PnMKLT1-014 from Conus pennaceus (Feathered cone).